A 177-amino-acid chain; its full sequence is Adenine phosphoribosyltransferase (177 aa).

It belongs to the purine/pyrimidine phosphoribosyltransferase family. Homodimer.

It localises to the cytoplasm. It carries out the reaction AMP + diphosphate = 5-phospho-alpha-D-ribose 1-diphosphate + adenine. It participates in purine metabolism; AMP biosynthesis via salvage pathway; AMP from adenine: step 1/1. Catalyzes a salvage reaction resulting in the formation of AMP, that is energically less costly than de novo synthesis. The polypeptide is Adenine phosphoribosyltransferase (Chlorobium luteolum (strain DSM 273 / BCRC 81028 / 2530) (Pelodictyon luteolum)).